The sequence spans 188 residues: Elongation factor P (188 aa).

The protein belongs to the elongation factor P family.

The protein resides in the cytoplasm. The protein operates within protein biosynthesis; polypeptide chain elongation. Functionally, involved in peptide bond synthesis. Stimulates efficient translation and peptide-bond synthesis on native or reconstituted 70S ribosomes in vitro. Probably functions indirectly by altering the affinity of the ribosome for aminoacyl-tRNA, thus increasing their reactivity as acceptors for peptidyl transferase. The chain is Elongation factor P from Bradyrhizobium diazoefficiens (strain JCM 10833 / BCRC 13528 / IAM 13628 / NBRC 14792 / USDA 110).